We begin with the raw amino-acid sequence, 342 residues long: Ribosomal RNA small subunit methyltransferase C (342 aa).

This sequence belongs to the methyltransferase superfamily. RsmC family. In terms of assembly, monomer.

Its subcellular location is the cytoplasm. It carries out the reaction guanosine(1207) in 16S rRNA + S-adenosyl-L-methionine = N(2)-methylguanosine(1207) in 16S rRNA + S-adenosyl-L-homocysteine + H(+). Specifically methylates the guanine in position 1207 of 16S rRNA in the 30S particle. The polypeptide is Ribosomal RNA small subunit methyltransferase C (Salmonella agona (strain SL483)).